The following is a 171-amino-acid chain: Protein GrpE (171 aa).

Residues 1 to 22 (MNHEQPDIESQQSAADAAATAG) form a disordered region.

It belongs to the GrpE family. As to quaternary structure, homodimer.

It is found in the cytoplasm. Functionally, participates actively in the response to hyperosmotic and heat shock by preventing the aggregation of stress-denatured proteins, in association with DnaK and GrpE. It is the nucleotide exchange factor for DnaK and may function as a thermosensor. Unfolded proteins bind initially to DnaJ; upon interaction with the DnaJ-bound protein, DnaK hydrolyzes its bound ATP, resulting in the formation of a stable complex. GrpE releases ADP from DnaK; ATP binding to DnaK triggers the release of the substrate protein, thus completing the reaction cycle. Several rounds of ATP-dependent interactions between DnaJ, DnaK and GrpE are required for fully efficient folding. This Stenotrophomonas maltophilia (strain K279a) protein is Protein GrpE.